Here is a 447-residue protein sequence, read N- to C-terminus: Phosphoglucosamine mutase (447 aa).

The active-site Phosphoserine intermediate is the serine 102. Residues serine 102, aspartate 241, aspartate 243, and aspartate 245 each contribute to the Mg(2+) site. At serine 102 the chain carries Phosphoserine.

This sequence belongs to the phosphohexose mutase family. Mg(2+) serves as cofactor. Activated by phosphorylation.

The enzyme catalyses alpha-D-glucosamine 1-phosphate = D-glucosamine 6-phosphate. Its function is as follows. Catalyzes the conversion of glucosamine-6-phosphate to glucosamine-1-phosphate. This chain is Phosphoglucosamine mutase, found in Delftia acidovorans (strain DSM 14801 / SPH-1).